The sequence spans 156 residues: SsrA-binding protein (156 aa).

This sequence belongs to the SmpB family.

The protein localises to the cytoplasm. Functionally, required for rescue of stalled ribosomes mediated by trans-translation. Binds to transfer-messenger RNA (tmRNA), required for stable association of tmRNA with ribosomes. tmRNA and SmpB together mimic tRNA shape, replacing the anticodon stem-loop with SmpB. tmRNA is encoded by the ssrA gene; the 2 termini fold to resemble tRNA(Ala) and it encodes a 'tag peptide', a short internal open reading frame. During trans-translation Ala-aminoacylated tmRNA acts like a tRNA, entering the A-site of stalled ribosomes, displacing the stalled mRNA. The ribosome then switches to translate the ORF on the tmRNA; the nascent peptide is terminated with the 'tag peptide' encoded by the tmRNA and targeted for degradation. The ribosome is freed to recommence translation, which seems to be the essential function of trans-translation. This Bacillus velezensis (strain DSM 23117 / BGSC 10A6 / LMG 26770 / FZB42) (Bacillus amyloliquefaciens subsp. plantarum) protein is SsrA-binding protein.